A 170-amino-acid polypeptide reads, in one-letter code: RNA pyrophosphohydrolase (170 aa).

Residues Gly-6–Arg-150 enclose the Nudix hydrolase domain. The Nudix box signature appears at Gly-39–Gly-60.

It belongs to the Nudix hydrolase family. RppH subfamily. A divalent metal cation is required as a cofactor.

Functionally, accelerates the degradation of transcripts by removing pyrophosphate from the 5'-end of triphosphorylated RNA, leading to a more labile monophosphorylated state that can stimulate subsequent ribonuclease cleavage. This is RNA pyrophosphohydrolase from Cellvibrio japonicus (strain Ueda107) (Pseudomonas fluorescens subsp. cellulosa).